Consider the following 1412-residue polypeptide: MSDFLITESTLEKTPVTASNIRVRKSFAKNKQVIDIPNLIELQKSSYEAFIQKDMDPDRRGDAGLNGVFKSVFPITDFNNTASLEFVSYTLEPAKYDVDECRQRGMTFAAPIKVTLRLIVFDVDEETEARSIRDVKEQEVYLGEIPLMTANGSFIINGTERVVVSQLHRSPGVFFDHDGGKNNASGKLIYSARVIPYRGSWLDAEFDQKDLIHVRIDRRRKFPVTILLKALGYNSEQLLEYFYDLDEVYVKGGKLFRKLDIERMSGQRALTDIVDPKTGEALVKAGRRITRAIVKKIKDLDITELDVLPEDLEGKVLAKPLIDESTGEIIADANAELNAAIIKRSIEAGIESFFMIFFDGLTVGPYLRNTLLVDKVSNKEESLVEIYKRLRPGEPPTLEAATTFFGRLFFDPETYDLSEVGRIKINHRFGISMDECPPSHRTLTHKDILSTIKTLIDLKNGRGVIDDIDHLGNRRVRSVGELLENQYRIGLVRMERAIRERMSLQDVETMMPHDLVNAKPVNAVVKEFFGSSQLSQFMDQTNPLSEITHKRRLSALGPGGLTRDRAGFEVRDVHPTHYGRICPIETPEGPNIGLIASLATYARINNYGFIETPYRKVEAGQVSKDINYLSALEEAGHHIAPAARDEAGNKAIQTATTITRRDGEYEIVDKDKVALMDVSPSQLVSIAASLIPFLEHDDANRALMGSNMQRQAVPLLRSRAPLVGTGVERLVARDSGTSIVAQNDGIVEEVDASRIVIRRFAKGGELGANVDIYNLTKYQRTNQNTCFNQKPIVTVGDKISKGDIIADGPSTELGELALGQNILVAFTPWQGYNFEDSILISERLLKDDVYTSIHIEEFECVARDTKLGKEEITRDIANVGEEALKDLDSSGIIRIGAEVRPGFILVGKVTPKGETQLSPEEKLLRAIFGEKAGDVRDTSLRAPSGVYGTVIDAQVYSREGADRDERLSLIIEEKKRKLEKDLAVEQNVIKNNAISKLRDILVGKITTGVLLNEDGSQKLLNKGQEITEADLETVPFELLNYIPLEQDLEFQVNKIIDNARNQLDAVKLVFNEKIDRLRKGDELPPGVIKMVKVYVAIKRKMQVGDKFAGRHGNKGVVSKVLPAEDMPYLADGTPVDMVLNPLGVPSRMNIGQILEVHLGWAAHNLGKQLGAHLEKWNAENARTEMKDIFSDSDISAKLDKADDASLKSMVQRMKHGIHVGTPVFDGARESDVKGLLAKAQVPSSGKSVLFDGRTGEPFTNPVTVGIMYMLKLHHLVEEKIHARSIGPYSLVSQQPLGGKAQFGGQRLGEMEVWAIEAYGAAYSLQEFLTVKSDDVAGRTRMYESIVKGENILEPGLPESFNVLVKELQSLALNVELMESDILRDQDEDFGDEEVIEVEPVAPVASKDEPEQH.

This sequence belongs to the RNA polymerase beta chain family. In terms of assembly, the RNAP catalytic core consists of 2 alpha, 1 beta, 1 beta' and 1 omega subunit. When a sigma factor is associated with the core the holoenzyme is formed, which can initiate transcription.

It carries out the reaction RNA(n) + a ribonucleoside 5'-triphosphate = RNA(n+1) + diphosphate. Its function is as follows. DNA-dependent RNA polymerase catalyzes the transcription of DNA into RNA using the four ribonucleoside triphosphates as substrates. This is DNA-directed RNA polymerase subunit beta from Bdellovibrio bacteriovorus (strain ATCC 15356 / DSM 50701 / NCIMB 9529 / HD100).